The chain runs to 643 residues: Phosphomethylpyrimidine synthase (643 aa).

Residues asparagine 248, methionine 277, tyrosine 306, histidine 342, 362 to 364 (SRG), 403 to 406 (DGLR), and glutamate 442 contribute to the substrate site. Histidine 446 provides a ligand contact to Zn(2+). Tyrosine 469 contacts substrate. Histidine 510 contributes to the Zn(2+) binding site. [4Fe-4S] cluster-binding residues include cysteine 590, cysteine 593, and cysteine 598.

This sequence belongs to the ThiC family. Homodimer. The cofactor is [4Fe-4S] cluster.

The catalysed reaction is 5-amino-1-(5-phospho-beta-D-ribosyl)imidazole + S-adenosyl-L-methionine = 4-amino-2-methyl-5-(phosphooxymethyl)pyrimidine + CO + 5'-deoxyadenosine + formate + L-methionine + 3 H(+). It functions in the pathway cofactor biosynthesis; thiamine diphosphate biosynthesis. Catalyzes the synthesis of the hydroxymethylpyrimidine phosphate (HMP-P) moiety of thiamine from aminoimidazole ribotide (AIR) in a radical S-adenosyl-L-methionine (SAM)-dependent reaction. The protein is Phosphomethylpyrimidine synthase of Burkholderia ambifaria (strain ATCC BAA-244 / DSM 16087 / CCUG 44356 / LMG 19182 / AMMD) (Burkholderia cepacia (strain AMMD)).